Consider the following 137-residue polypeptide: Small ribosomal subunit protein uS12 (137 aa).

A disordered region spans residues 1-55 (MPTINQLVRKPRQSKSKKSDSPALNRNFNSKKKKFTDLNSPQKRGVCTRVGTMTP). Asp102 bears the 3-methylthioaspartic acid mark. The disordered stretch occupies residues 118 to 137 (SGVDGRRQGRSLYGTKKPKK).

It belongs to the universal ribosomal protein uS12 family. Part of the 30S ribosomal subunit. Contacts proteins S8 and S17. May interact with IF1 in the 30S initiation complex.

In terms of biological role, with S4 and S5 plays an important role in translational accuracy. Its function is as follows. Interacts with and stabilizes bases of the 16S rRNA that are involved in tRNA selection in the A site and with the mRNA backbone. Located at the interface of the 30S and 50S subunits, it traverses the body of the 30S subunit contacting proteins on the other side and probably holding the rRNA structure together. The combined cluster of proteins S8, S12 and S17 appears to hold together the shoulder and platform of the 30S subunit. The polypeptide is Small ribosomal subunit protein uS12 (Staphylococcus saprophyticus subsp. saprophyticus (strain ATCC 15305 / DSM 20229 / NCIMB 8711 / NCTC 7292 / S-41)).